The following is an 81-amino-acid chain: Costars family protein ABRACL (81 aa).

N-acetylmethionine is present on Met-1.

It belongs to the costars family.

The chain is Costars family protein ABRACL (ABRACL) from Homo sapiens (Human).